We begin with the raw amino-acid sequence, 545 residues long: CTP synthase (545 aa).

Residues 1–266 (MTTKYIFVTG…DEICVKRFGL (266 aa)) form an amidoligase domain region. Residue serine 14 participates in CTP binding. Serine 14 contributes to the UTP binding site. ATP is bound by residues 15–20 (SLGKGI) and aspartate 72. Residues aspartate 72 and glutamate 140 each coordinate Mg(2+). CTP contacts are provided by residues 147–149 (DIE), 187–192 (KTKPTQ), and lysine 223. UTP is bound by residues 187–192 (KTKPTQ) and lysine 223. 239-241 (RDV) is a binding site for ATP. In terms of domain architecture, Glutamine amidotransferase type-1 spans 291 to 542 (IIGMVGKYTE…IKSAIDHQQG (252 aa)). Glycine 352 lines the L-glutamine pocket. The active-site Nucleophile; for glutamine hydrolysis is cysteine 379. Residues 380–383 (LGMQ), glutamate 403, and arginine 470 each bind L-glutamine. Residues histidine 515 and glutamate 517 contribute to the active site.

This sequence belongs to the CTP synthase family. As to quaternary structure, homotetramer.

The catalysed reaction is UTP + L-glutamine + ATP + H2O = CTP + L-glutamate + ADP + phosphate + 2 H(+). It carries out the reaction L-glutamine + H2O = L-glutamate + NH4(+). It catalyses the reaction UTP + NH4(+) + ATP = CTP + ADP + phosphate + 2 H(+). The protein operates within pyrimidine metabolism; CTP biosynthesis via de novo pathway; CTP from UDP: step 2/2. Allosterically activated by GTP, when glutamine is the substrate; GTP has no effect on the reaction when ammonia is the substrate. The allosteric effector GTP functions by stabilizing the protein conformation that binds the tetrahedral intermediate(s) formed during glutamine hydrolysis. Inhibited by the product CTP, via allosteric rather than competitive inhibition. Its function is as follows. Catalyzes the ATP-dependent amination of UTP to CTP with either L-glutamine or ammonia as the source of nitrogen. Regulates intracellular CTP levels through interactions with the four ribonucleotide triphosphates. The protein is CTP synthase of Psychromonas ingrahamii (strain DSM 17664 / CCUG 51855 / 37).